The sequence spans 2272 residues: Voltage-dependent R-type calcium channel subunit alpha-1E (2272 aa).

The disordered stretch occupies residues Met-1–Tyr-40. The Cytoplasmic segment spans residues Met-1–Pro-90. 2 positions are modified to phosphoserine: Ser-15 and Ser-20. The stretch at Asn-77–Phe-355 is one I repeat. A helical membrane pass occupies residues Pro-91–Leu-109. At Glu-110 to Thr-128 the chain is on the extracellular side. The helical transmembrane segment at Glu-129–Leu-147 threads the bilayer. Residues Gly-148–Asn-159 lie on the Cytoplasmic side of the membrane. Residues Gly-160–Leu-174 traverse the membrane as a helical segment. Residues Ala-175–Asp-186 lie on the Extracellular side of the membrane. Residues Leu-187–Pro-206 form a helical membrane-spanning segment. Over Ser-207–Gln-224 the chain is Cytoplasmic. The helical transmembrane segment at Ile-225 to Ser-245 threads the bilayer. The Extracellular portion of the chain corresponds to Gly-246–Trp-327. Residue Asn-255 is glycosylated (N-linked (GlcNAc...) asparagine). Residues Asn-328 to Leu-351 traverse the membrane as a helical segment. At Ser-352–Gln-477 the chain is on the cytoplasmic side. Residues Gln-375 to Glu-392 form a binding to the beta subunit region. Ca(2+) is bound at residue Asp-427. A Phosphoserine modification is found at Ser-428. Residues Ser-429, Glu-431, Cys-433, and Ser-438 each coordinate Ca(2+). Thr-441 is subject to Phosphothreonine. The II repeat unit spans residues Glu-463–Leu-707. The helical transmembrane segment at Val-478–Val-497 threads the bilayer. At His-498–Tyr-510 the chain is on the extracellular side. The helical transmembrane segment at Tyr-511–Gly-530 threads the bilayer. Topologically, residues Met-531 to Ser-539 are cytoplasmic. A helical membrane pass occupies residues Ser-540–Trp-558. Residues Ala-559 to Gly-568 are Extracellular-facing. A helical membrane pass occupies residues Ile-569–Trp-587. The Cytoplasmic portion of the chain corresponds to Ala-588–Ser-606. A helical transmembrane segment spans residues Leu-607–Phe-626. Residues Gly-627 to Trp-679 lie on the Extracellular side of the membrane. Residues Ser-680–Val-704 form a helical membrane-spanning segment. The Cytoplasmic segment spans residues Asp-705–His-1150. Residues Leu-730 to Ser-777 form a disordered region. 5 positions are modified to phosphoserine: Ser-737, Ser-746, Ser-794, Ser-816, and Ser-856. Disordered stretches follow at residues Gly-854–Gly-994 and Ser-1091–Gly-1127. The segment covering Arg-914–Val-927 has biased composition (basic residues). The segment covering Ser-934–Glu-946 has biased composition (low complexity). Ser-948 carries the post-translational modification Phosphoserine. Basic and acidic residues-rich tracts occupy residues Glu-956 to Arg-985 and Thr-1094 to Glu-1105. Ser-1099 is modified (phosphoserine). The stretch at Asn-1143–Phe-1429 is one III repeat. A helical transmembrane segment spans residues Tyr-1151–Ala-1167. The Extracellular portion of the chain corresponds to Ala-1168–Tyr-1191. A helical transmembrane segment spans residues Phe-1192–Gln-1211. Topologically, residues Gly-1212–Ser-1219 are cytoplasmic. Residues Tyr-1220–Leu-1242 form a helical membrane-spanning segment. The Extracellular segment spans residues Ala-1243–Thr-1256. Residues Ile-1257 to Arg-1274 form a helical membrane-spanning segment. Over Leu-1275–Phe-1293 the chain is Cytoplasmic. The helical transmembrane segment at Asn-1294–Leu-1313 threads the bilayer. Topologically, residues Phe-1314–Met-1400 are extracellular. Residues Glu-1401–Leu-1424 traverse the membrane as a helical segment. Topologically, residues Ile-1425 to Pro-1481 are cytoplasmic. Residues Asn-1466–Phe-1729 form an IV repeat. The chain crosses the membrane as a helical span at residues Ser-1482–Met-1500. Topologically, residues Lys-1501–Tyr-1515 are extracellular. A helical transmembrane segment spans residues Leu-1516 to Phe-1535. Residues Gly-1536–Asp-1543 lie on the Cytoplasmic side of the membrane. Residues Thr-1544 to Leu-1562 form a helical membrane-spanning segment. At Thr-1563–Phe-1573 the chain is on the extracellular side. Asn-1569 is a glycosylation site (N-linked (GlcNAc...) asparagine). A helical membrane pass occupies residues Asn-1574–Gln-1592. The Cytoplasmic segment spans residues Gly-1593–Pro-1611. The helical transmembrane segment at Tyr-1612–Val-1631 threads the bilayer. The Extracellular portion of the chain corresponds to Phe-1632 to Asp-1700. The N-linked (GlcNAc...) asparagine glycan is linked to Asn-1692. A helical transmembrane segment spans residues Leu-1701–Met-1726. Topologically, residues Asp-1727–Cys-2272 are cytoplasmic. The region spanning His-1742–Pro-1777 is the EF-hand domain. Ca(2+) contacts are provided by Asp-1755, Arg-1761, and Glu-1766. The interval Ser-2021–His-2186 is disordered. Residues Leu-2025–Arg-2045 show a composition bias toward basic and acidic residues. 2 positions are modified to phosphoserine: Ser-2054 and Ser-2073. Over residues Asn-2061–Gln-2078 the composition is skewed to basic and acidic residues. Positions Ser-2097–Pro-2112 are enriched in low complexity. The segment covering Leu-2155–Leu-2174 has biased composition (polar residues). Residues His-2175–His-2186 show a composition bias toward low complexity.

It belongs to the calcium channel alpha-1 subunit (TC 1.A.1.11) family. CACNA1E subfamily. As to quaternary structure, interacts with EFHC1. Voltage-dependent calcium channels are multisubunit complexes, consisting of alpha-1, alpha-2, beta and delta subunits in a 1:1:1:1 ratio. The channel activity is directed by the pore-forming and voltage-sensitive alpha-1 subunit. In many cases, this subunit is sufficient to generate voltage-sensitive calcium channel activity. The auxiliary subunits beta and alpha-2/delta linked by a disulfide bridge regulate the channel activity. In terms of tissue distribution, expressed in neuronal tissues, retina, spleen, and pancreatic islet cells.

The protein resides in the membrane. It carries out the reaction Ca(2+)(in) = Ca(2+)(out). Voltage-sensitive calcium channels (VSCC) mediate the entry of calcium ions into excitable cells and are also involved in a variety of calcium-dependent processes, including muscle contraction, hormone or neurotransmitter release, gene expression, cell motility, cell division and cell death. The isoform alpha-1E gives rise to R-type calcium currents. R-type calcium channels belong to the 'high-voltage activated' (HVA) group and are blocked by nickel. They are however insensitive to dihydropyridines (DHP). Calcium channels containing alpha-1E subunit could be involved in the modulation of firing patterns of neurons which is important for information processing. The protein is Voltage-dependent R-type calcium channel subunit alpha-1E (Cacna1e) of Mus musculus (Mouse).